Consider the following 140-residue polypeptide: Large ribosomal subunit protein uL11 (140 aa).

The protein belongs to the universal ribosomal protein uL11 family. As to quaternary structure, part of the ribosomal stalk of the 50S ribosomal subunit. Interacts with L10 and the large rRNA to form the base of the stalk. L10 forms an elongated spine to which L12 dimers bind in a sequential fashion forming a multimeric L10(L12)X complex. Post-translationally, one or more lysine residues are methylated.

Functionally, forms part of the ribosomal stalk which helps the ribosome interact with GTP-bound translation factors. The sequence is that of Large ribosomal subunit protein uL11 from Karelsulcia muelleri (strain GWSS) (Sulcia muelleri).